The primary structure comprises 519 residues: Cyclic AMP-responsive element-binding protein 3-like protein 1 (519 aa).

Positions 1–60 (MDAVLEPFPADRLFPGSSFLDLGDLNESDFLNNAHFPEHLDHFVENMEDFSNDLFSSFFD) are required for transcription activation. Topologically, residues 1 to 376 (MDAVLEPFPA…MAATQTGTCL (376 aa)) are cytoplasmic. A Glycyl lysine isopeptide (Lys-Gly) (interchain with G-Cter in SUMO2) cross-link involves residue Lys-184. A disordered region spans residues 200-259 (DLVQMPPTPPSSHGSDSDGSQSPRSLPPSSPVRPMARSSTAISTSPLLTAPHKLQGTSGP). The span at 210 to 223 (SSHGSDSDGSQSPR) shows a compositional bias: low complexity. The span at 236–246 (RSSTAISTSPL) shows a compositional bias: polar residues. One can recognise a bZIP domain in the interval 290–353 (ALKRVRRKIK…RTLLQQLQKL (64 aa)). The basic motif stretch occupies residues 292–321 (KRVRRKIKNKISAQESRRKKKEYVECLEKK). The leucine-zipper stretch occupies residues 332–353 (LWKKVETLETANRTLLQQLQKL). The chain crosses the membrane as a helical; Signal-anchor for type II membrane protein span at residues 377 to 397 (MVAALCFVLVLGSLVPCLPAF). The S2P recognition motif lies at 392-395 (PCLP). Residues 398 to 519 (SSGSMTVKED…LGPNTTIKLS (122 aa)) lie on the Lumenal side of the membrane. Positions 423–426 (RSLL) match the S1P recognition motif. Residues 449–519 (EGWELKPGGP…LGPNTTIKLS (71 aa)) are disordered. Residues 462–486 (RPQDHLRHDRADSIHETTKYLRETW) show a composition bias toward basic and acidic residues. 3 N-linked (GlcNAc...) asparagine glycosylation sites follow: Asn-493, Asn-498, and Asn-513.

The protein belongs to the bZIP family. ATF subfamily. Interacts with SMAD4, the interaction takes place upon TGFB1 induction and SMAD4 acts as a CREB3L1 coactivator to induce the expression of genes involved in assembly of collagen extracellular matrix. In terms of processing, N-glycosylated. Ubiquitinated by HRD1/SYVN1; undergoes 'Lys-48'-linked ubiquitination, followed by rapid proteasomal degradation under normal conditions. Upon ER stress, SYVN1 E3 ubiquitin-protein ligase dissociates from its substrate, ubiquitination does not occur and CREB3L1 is stabilized. Post-translationally, upon ER stress or DNA damage, translocated to the Golgi apparatus, where it is processed by regulated intramembrane proteolysis (RIP) to release the cytosol-facing N-terminal transcription factor domain. The cleavage is performed sequentially by site-1 and site-2 proteases (S1P/MBTPS1 and S2P/MBTPS2). RIP is induced by TGFB1 and ceramide. Expressed in cortical and trabecular bones. Highly expressed in osteoblasts, but not detected in osteoclasts, nor in macrophages. Expressed at relatively low levels in lung and kidney. Weakly expressed in brain and spleen. Expressed in astrocytes.

It is found in the endoplasmic reticulum membrane. Its subcellular location is the nucleus. In terms of biological role, precursor of the transcription factor form (Processed cyclic AMP-responsive element-binding protein 3-like protein 1), which is embedded in the endoplasmic reticulum membrane with N-terminal DNA-binding and transcription activation domains oriented toward the cytosolic face of the membrane. In response to ER stress or DNA damage, transported to the Golgi, where it is cleaved in a site-specific manner by resident proteases S1P/MBTPS1 and S2P/MBTPS2. The released N-terminal cytosolic domain is translocated to the nucleus where it activates transcription of specific target genes involved in the cell-cycle progression inhibition. Its function is as follows. Transcription factor involved in cell type specific DNA damage and unfolded protein response (UPR). Binds the DNA consensus sequence 5'-GTGXGCXGC-3'. Plays a critical role in bone formation through the transcription of COL1A1, and possibly COL1A2, and the secretion of bone matrix proteins. Directly binds to the UPR element (UPRE)-like sequence in an osteoblast-specific COL1A1 promoter region and induces its transcription. Does not regulate COL1A1 in other tissues, such as skin. Required to protect astrocytes from ER stress-induced cell death. In astrocytes, binds to the cAMP response element (CRE) of the BiP/HSPA5 promoter and participate in its transcriptional activation. In astrocytes and osteoblasts, upon DNA damage, inhibits cell-cycle progression after G2/M phase by binding to promoters and activating transcription of genes encoding cell-cycle inhibitors, such as p21/CDKN1A. Required for TGFB1 to activate genes involved in the assembly of collagen extracellular matrix. The polypeptide is Cyclic AMP-responsive element-binding protein 3-like protein 1 (Creb3l1) (Mus musculus (Mouse)).